Consider the following 274-residue polypeptide: Kit ligand (274 aa).

An N-terminal signal peptide occupies residues 1 to 25 (MKKTQTWIITCIYLQLLLFNPLVRT). Residues 26–215 (KGICRNRVTD…ANPLGDSNLQ (190 aa)) lie on the Extracellular side of the membrane. Disulfide bonds link Cys-29/Cys-114 and Cys-68/Cys-164. 4 N-linked (GlcNAc...) asparagine glycosylation sites follow: Asn-90, Asn-97, Asn-145, and Asn-196. Residues 216-238 (WAAMALPAFFSLVIGFAFGALYW) form a helical membrane-spanning segment. The Cytoplasmic portion of the chain corresponds to 239–274 (KKKQPNLTRTAENIQINEEDNEISMLQEKEREFQEV).

Belongs to the SCF family. In terms of assembly, homodimer, non-covalently linked. Heterotetramer with KIT, binding two KIT molecules; thereby mediates KIT dimerization and subsequent activation by autophosphorylation. In terms of processing, a soluble form is produced by proteolytic processing of isoform 1 in the extracellular domain.

The protein localises to the cytoplasm. It is found in the cytoskeleton. The protein resides in the cell membrane. It localises to the cell projection. Its subcellular location is the lamellipodium. The protein localises to the filopodium. It is found in the secreted. Its function is as follows. Ligand for the receptor-type protein-tyrosine kinase KIT. Plays an essential role in the regulation of cell survival and proliferation, hematopoiesis, stem cell maintenance, gametogenesis, mast cell development, migration and function, and in melanogenesis. KITLG/SCF binding can activate several signaling pathways. Promotes phosphorylation of PIK3R1, the regulatory subunit of phosphatidylinositol 3-kinase, and subsequent activation of the kinase AKT1. KITLG/SCF and KIT also transmit signals via GRB2 and activation of RAS, RAF1 and the MAP kinases MAPK1/ERK2 and/or MAPK3/ERK1. KITLG/SCF and KIT promote activation of STAT family members STAT1, STAT3 and STAT5. KITLG/SCF and KIT promote activation of PLCG1, leading to the production of the cellular signaling molecules diacylglycerol and inositol 1,4,5-trisphosphate. KITLG/SCF acts synergistically with other cytokines, probably interleukins. The sequence is that of Kit ligand (KITLG) from Neovison vison (American mink).